Reading from the N-terminus, the 222-residue chain is Beta-casein (222 aa).

The signal sequence occupies residues 1-15 (MKVLILACLVALAIA). Threonine 27 carries the phosphothreonine modification. Serine 30, serine 32, serine 33, and serine 34 each carry phosphoserine.

It belongs to the beta-casein family. In terms of tissue distribution, mammary gland specific. Secreted in milk.

The protein resides in the secreted. In terms of biological role, important role in determination of the surface properties of the casein micelles. This Capra hircus (Goat) protein is Beta-casein (CSN2).